Reading from the N-terminus, the 757-residue chain is E3 ubiquitin-protein ligase RNF12-B (757 aa).

Positions 1–10 (MESADSTGKG) are enriched in polar residues. Disordered regions lie at residues 1 to 29 (MESA…LDRE), 68 to 519 (LQQI…TYES), and 619 to 652 (EPAE…GGVT). Positions 11–21 (STEQSESQRQS) are enriched in low complexity. Polar residues-rich tracts occupy residues 110–138 (SVRQ…NPNS) and 147–163 (INVN…SLDQ). 21 tandem repeats follow at residues 197 to 202 (PESVDE), 203 to 208 (PVSVAE), 209 to 214 (PVSVAE), 215 to 220 (PVSVAE), 221 to 226 (PESVAE), 227 to 232 (PESVAA), 237 to 242 (PESVPE), 243 to 248 (PESVPE), 249 to 254 (PESVPE), 255 to 260 (PESVPE), 261 to 266 (PESVPE), 267 to 272 (PESVPE), 273 to 278 (PESVPE), 279 to 284 (PESVPE), 285 to 290 (PESVPE), 291 to 296 (PESVPE), 297 to 302 (PESVPE), 303 to 308 (PESVPE), 309 to 314 (PESIAE), 315 to 320 (PESVPV), and 321 to 326 (PESVPV). The segment at 197–326 (PESVDEPVSV…SVPVPESVPV (130 aa)) is 21 X 6 AA approximate repeats of P-[EV]-S-V-[PA]-[EV]. Residues 202 to 237 (EPVSVAEPVSVAEPVSVAEPESVAEPESVAASVPVP) are compositionally biased toward low complexity. Over residues 245–313 (SVPEPESVPE…ESVPEPESIA (69 aa)) the composition is skewed to acidic residues. Residues 314 to 327 (EPESVPVPESVPVA) are compositionally biased toward low complexity. Residues 352–367 (RSPDQRRTRARTDRSR) show a composition bias toward basic and acidic residues. The segment covering 383-392 (HSSSQTVDAS) has biased composition (polar residues). Low complexity predominate over residues 408–424 (SSQVHSSSSNETEGSSR). Residues 428 to 452 (HITARQQALGTEGQSQSTVHLSNPE) show a composition bias toward polar residues. The segment covering 453–466 (SRSSSQTPQTDSPS) has biased composition (low complexity). Polar residues predominate over residues 467–476 (NAETTGTGQR). Residues 490–500 (RPGDYRQRDSI) show a composition bias toward basic and acidic residues. Polar residues predominate over residues 501–517 (ANRTRSRSQTPNNTVTY). The RING-type; atypical zinc-finger motif lies at 703 to 744 (CSVCITEYTEGNKLRKLPCSHEYHIHCIDRWLSENSTCPICR). The PDZ-binding motif lies at 754–757 (ESIV).

The protein belongs to the RNF12 family. In terms of assembly, forms homodimers through the C-terminal region. The N-terminus interacts with the homeobox of LIM/homeobox factor lhx1/lim1, with lhx3/lim3 and lhx5/lim5, and with the N-terminus of ldb1. Shows overlapping expression with lhx1/lim1 and ldb1 in the gastrula mesoderm, and expression overlaps with ldb1 throughout early embryogenesis. After gastrulation, expression is gradually restricted to tissues originated from the ectoderm, the neuroectoderm, neural crest and epidermis, and subsequently to the neural tube as well as the head and tailbud region.

It is found in the nucleus. It catalyses the reaction S-ubiquitinyl-[E2 ubiquitin-conjugating enzyme]-L-cysteine + [acceptor protein]-L-lysine = [E2 ubiquitin-conjugating enzyme]-L-cysteine + N(6)-ubiquitinyl-[acceptor protein]-L-lysine.. It functions in the pathway protein modification; protein ubiquitination. In terms of biological role, acts as an E3 ubiquitin-protein ligase specific for ldb1, mediating ubiquitination and proteasome-dependent degradation of excess ldb1 in a RING-dependent manner. Does not degrade ldb1 bound to lhx1/lim1, nor lim1 itself and thus contributes to the establishment of proper ldb1-lhx1/lim1 stoichiometry and the formation of a ldb1-lhx1/lim1 complex. Interferes with Spemann organizer function and suppresses secondary axis formation induced by ldb1 and lhx1/lim1. This is E3 ubiquitin-protein ligase RNF12-B (rnf12-b) from Xenopus laevis (African clawed frog).